The chain runs to 490 residues: Argininosuccinate lyase (490 aa).

This sequence belongs to the lyase 1 family. Argininosuccinate lyase subfamily.

The protein localises to the cytoplasm. It carries out the reaction 2-(N(omega)-L-arginino)succinate = fumarate + L-arginine. It functions in the pathway amino-acid biosynthesis; L-arginine biosynthesis; L-arginine from L-ornithine and carbamoyl phosphate: step 3/3. The protein is Argininosuccinate lyase of Bifidobacterium longum (strain DJO10A).